A 169-amino-acid chain; its full sequence is Peptide deformylase (169 aa).

The Fe cation site is built by cysteine 91 and histidine 133. Glutamate 134 is an active-site residue. Position 137 (histidine 137) interacts with Fe cation.

This sequence belongs to the polypeptide deformylase family. The cofactor is Fe(2+).

The catalysed reaction is N-terminal N-formyl-L-methionyl-[peptide] + H2O = N-terminal L-methionyl-[peptide] + formate. Removes the formyl group from the N-terminal Met of newly synthesized proteins. Requires at least a dipeptide for an efficient rate of reaction. N-terminal L-methionine is a prerequisite for activity but the enzyme has broad specificity at other positions. The sequence is that of Peptide deformylase from Hydrogenovibrio crunogenus (strain DSM 25203 / XCL-2) (Thiomicrospira crunogena).